The chain runs to 785 residues: Endonuclease MutS2 (785 aa).

ATP is bound at residue 331–338; the sequence is GPNTGGKT. The region spanning 710–785 is the Smr domain; the sequence is LDLRGLYADE…GLGVTVVELA (76 aa).

The protein belongs to the DNA mismatch repair MutS family. MutS2 subfamily. Homodimer. Binds to stalled ribosomes, contacting rRNA.

In terms of biological role, endonuclease that is involved in the suppression of homologous recombination and thus may have a key role in the control of bacterial genetic diversity. Its function is as follows. Acts as a ribosome collision sensor, splitting the ribosome into its 2 subunits. Detects stalled/collided 70S ribosomes which it binds and splits by an ATP-hydrolysis driven conformational change. Acts upstream of the ribosome quality control system (RQC), a ribosome-associated complex that mediates the extraction of incompletely synthesized nascent chains from stalled ribosomes and their subsequent degradation. Probably generates substrates for RQC. The sequence is that of Endonuclease MutS2 from Pelotomaculum thermopropionicum (strain DSM 13744 / JCM 10971 / SI).